Here is a 204-residue protein sequence, read N- to C-terminus: Thymidine kinase (204 aa).

Residues 23 to 30 (GSMFSGKT) and 95 to 98 (DEAQ) contribute to the ATP site. The active-site Proton acceptor is Glu-96. Zn(2+) is bound by residues Cys-152, Cys-155, Cys-184, and Cys-187.

It belongs to the thymidine kinase family. Homotetramer.

It is found in the cytoplasm. It carries out the reaction thymidine + ATP = dTMP + ADP + H(+). In Porphyromonas gingivalis (strain ATCC BAA-308 / W83), this protein is Thymidine kinase.